Reading from the N-terminus, the 409-residue chain is MSDVKKVVLAYSGGLDTSVILKWLQDTYQCEVVTFTADLGQGEELEPARQKALKFGIKPENIFIDDLREEFVRDFVFPMFRANTIYEGEYLLGTSIARPLIAKRQIEIARATGADAVSHGATGKGNDQVRFELGYYALMPGVKVIAPWREWDLLSREKLLAYAEKHGIPIEMKHKQGGSPYSMDANLLHISFEGRHLENPAAEAEESMWRWTVSPEAAPDAAEYVDLEFEKGDLVAINGQRLKAHELLAKLNELGGKHGIGRLDLVENRYVGMKSRGCYETPGGTILLRAHRAIESITLDREVAHLKDDLMPRYASMIYNGYWWSPERQALQALVDHTQQTVNGWVRIKLYKGNVIVVARDSKTDSLFDPTIATFEDDQGAYNQKDAHGFIRLNALRMRIAANAKTKRG.

ATP contacts are provided by residues 10-18 and Ala37; that span reads AYSGGLDTS. L-citrulline-binding residues include Tyr90 and Ser95. Gly120 contributes to the ATP binding site. Thr122, Asn126, and Asp127 together coordinate L-aspartate. L-citrulline is bound at residue Asn126. 5 residues coordinate L-citrulline: Arg130, Ser182, Ser191, Glu267, and Tyr279.

The protein belongs to the argininosuccinate synthase family. Type 1 subfamily. In terms of assembly, homotetramer.

It localises to the cytoplasm. The enzyme catalyses L-citrulline + L-aspartate + ATP = 2-(N(omega)-L-arginino)succinate + AMP + diphosphate + H(+). Its pathway is amino-acid biosynthesis; L-arginine biosynthesis; L-arginine from L-ornithine and carbamoyl phosphate: step 2/3. This is Argininosuccinate synthase from Azoarcus sp. (strain BH72).